We begin with the raw amino-acid sequence, 576 residues long: Rho GTPase-activating protein gacP (576 aa).

Residues 123–189 (LKSIIKTELK…RTNFERVGID (67 aa)) are a coiled coil. A Rho-GAP domain is found at 277 to 462 (EDLSVLLNRE…TIIQNFDRIF (186 aa)). The interval 472-576 (VPDTYVPPPN…DEGDAVELSD (105 aa)) is disordered. Positions 482 to 500 (NTRNNSVNNFNNVQPSSFS) are enriched in low complexity. Residues 501–513 (ASTSRSINLNKST) are compositionally biased toward polar residues. Low complexity predominate over residues 514-530 (NNPNINDDNNNNNNINN). Positions 565–576 (SFDEGDAVELSD) are enriched in acidic residues.

The protein resides in the cytoplasm. In terms of biological role, rho GTPase-activating protein involved in the signal transduction pathway. This Dictyostelium discoideum (Social amoeba) protein is Rho GTPase-activating protein gacP (gacP).